The following is a 581-amino-acid chain: Amino-acid acetyltransferase, mitochondrial (581 aa).

Positions 401-558 (FTLHNLIEDE…RIVGSEAVNI (158 aa)) constitute an N-acetyltransferase domain.

It belongs to the acetyltransferase family.

The protein localises to the mitochondrion. It catalyses the reaction L-glutamate + acetyl-CoA = N-acetyl-L-glutamate + CoA + H(+). Its pathway is amino-acid biosynthesis; L-arginine biosynthesis; N(2)-acetyl-L-ornithine from L-glutamate: step 1/4. Its function is as follows. N-acetylglutamate synthase involved in arginine biosynthesis. In Scheffersomyces stipitis (strain ATCC 58785 / CBS 6054 / NBRC 10063 / NRRL Y-11545) (Yeast), this protein is Amino-acid acetyltransferase, mitochondrial (ARG2).